A 283-amino-acid polypeptide reads, in one-letter code: Pantothenate synthetase (283 aa).

Met-30 to His-37 provides a ligand contact to ATP. Residue His-37 is the Proton donor of the active site. Gln-61 contacts (R)-pantoate. Gln-61 provides a ligand contact to beta-alanine. Gly-147 to Asp-150 serves as a coordination point for ATP. (R)-pantoate is bound at residue Gln-153. ATP-binding positions include Val-176 and Lys-184 to Arg-187.

It belongs to the pantothenate synthetase family. Homodimer.

The protein localises to the cytoplasm. It catalyses the reaction (R)-pantoate + beta-alanine + ATP = (R)-pantothenate + AMP + diphosphate + H(+). Its pathway is cofactor biosynthesis; (R)-pantothenate biosynthesis; (R)-pantothenate from (R)-pantoate and beta-alanine: step 1/1. In terms of biological role, catalyzes the condensation of pantoate with beta-alanine in an ATP-dependent reaction via a pantoyl-adenylate intermediate. The polypeptide is Pantothenate synthetase (Clostridium novyi (strain NT)).